The sequence spans 410 residues: Histone-lysine N-methyltransferase SUV39H2 (410 aa).

The 59-residue stretch at 47–105 (YEVEYLCDYKVVKDMEYYLVKWKGWPDSTNTWEPLQNLKCPLLLQQFFNDKHNYLSQVK) folds into the Chromo domain. Residues 189 to 247 (FGCSCTDCFFEKCCPAEAGVLLAYNKNQQIKIPPGTPIYECNSRCQCGPDCPNRIVQKG) enclose the Pre-SET domain. Zn(2+)-binding residues include C191, C193, C196, C201, C202, C229, C233, C235, and C239. The SET domain occupies 250-373 (YSLCIFRTSN…AGEELTFDYQ (124 aa)). S-adenosyl-L-methionine-binding positions include 261-263 (CGW), Y304, and 330-331 (NH). C333 is a binding site for Zn(2+). A phosphoserine mark is found at S381, S384, and S388. The 17-residue stretch at 394–410 (ARTVCKCGAVTCRGYLN) folds into the Post-SET domain. Zn(2+) contacts are provided by C398, C400, and C405.

The protein belongs to the class V-like SAM-binding methyltransferase superfamily. Histone-lysine methyltransferase family. Suvar3-9 subfamily. In terms of assembly, interacts with SMAD5. The large PER complex involved in the histone methylation is composed of at least PER2, CBX3, TRIM28, SUV39H1 and/or SUV39H2; CBX3 mediates the formation of the complex. In terms of processing, ubiquitinated by the DCX(DCAF13) E3 ubiquitin ligase complex, leading to its degradation.

It localises to the nucleus. It is found in the chromosome. The protein localises to the centromere. It carries out the reaction L-lysyl(9)-[histone H3] + 3 S-adenosyl-L-methionine = N(6),N(6),N(6)-trimethyl-L-lysyl(9)-[histone H3] + 3 S-adenosyl-L-homocysteine + 3 H(+). Functionally, histone methyltransferase that specifically trimethylates 'Lys-9' of histone H3 using monomethylated H3 'Lys-9' as substrate. H3 'Lys-9' trimethylation represents a specific tag for epigenetic transcriptional repression by recruiting HP1 (CBX1, CBX3 and/or CBX5) proteins to methylated histones. Mainly functions in heterochromatin regions, thereby playing a central role in the establishment of constitutive heterochromatin at pericentric and telomere regions. H3 'Lys-9' trimethylation is also required to direct DNA methylation at pericentric repeats. SUV39H1 is targeted to histone H3 via its interaction with RB1 and is involved in many processes, such as cell cycle regulation, transcriptional repression and regulation of telomere length. May participate in regulation of higher-order chromatin organization during spermatogenesis. Recruited by the large PER complex to the E-box elements of the circadian target genes such as PER2 itself or PER1, contributes to the conversion of local chromatin to a heterochromatin-like repressive state through H3 'Lys-9' trimethylation. This Bos taurus (Bovine) protein is Histone-lysine N-methyltransferase SUV39H2 (SUV39H2).